Here is a 1045-residue protein sequence, read N- to C-terminus: Desmoglein-1 (1045 aa).

The N-terminal stretch at 1-23 (MNWPFFRTAAVLFIFLVVLEVNS) is a signal peptide. A propeptide spanning residues 24-49 (EFRIQVRDYNTKNGTIKWHSIRRQKR) is cleaved from the precursor. Residues Asn-36, Asn-110, and Asn-180 are each glycosylated (N-linked (GlcNAc...) asparagine). 4 Cadherin domains span residues 50 to 158 (EWIK…PVFS), 159 to 270 (MSTF…PYME), 271 to 385 (LPSN…GSVF), and 386 to 496 (RPGS…TDGA). At 50–546 (EWIKFAAACR…HPLDNVHFGP (497 aa)) the chain is on the extracellular side. A helical transmembrane segment spans residues 547-567 (AGIGLLIMGFLVLGLVPFLLM). The Cytoplasmic portion of the chain corresponds to 568–1045 (YCDCGGAPGG…TKYSTVQYTK (478 aa)). 5 Desmoglein repeat repeats span residues 814-840 (TYPSGPGVHHPMPIPDPLSYGNVTMTE), 841-870 (SYTTSGILKPSVHVHDNRQASNVVVTERVV), 871-900 (GPISGANLHGMLEMPDLRDGSNVIVTERVI), 901-928 (APNSSLPTTLTIPDPRESSNVVVTERVI), and 929-957 (RPTSGIVGNLSMHPDISNTHNVIVTERVV). The tract at residues 1019–1045 (FSNTLGSASPTTTRSRITKYSTVQYTK) is disordered. Residues 1020–1045 (SNTLGSASPTTTRSRITKYSTVQYTK) show a composition bias toward polar residues.

Binds to JUP/plakoglobin. Interacts with PKP2. Interacts with DSC3; there is evidence to suggest that the interaction promotes cell-cell adhesion of keratinocytes.

The protein resides in the cell membrane. The protein localises to the cell junction. It localises to the desmosome. It is found in the cytoplasm. Its subcellular location is the nucleus. Component of intercellular desmosome junctions. Involved in the interaction of plaque proteins and intermediate filaments mediating cell-cell adhesion. This Sus scrofa (Pig) protein is Desmoglein-1 (DSG1).